Here is a 297-residue protein sequence, read N- to C-terminus: Pyrroline-5-carboxylate reductase 1 (297 aa).

This sequence belongs to the pyrroline-5-carboxylate reductase family.

The protein resides in the cytoplasm. It carries out the reaction L-proline + NADP(+) = (S)-1-pyrroline-5-carboxylate + NADPH + 2 H(+). It catalyses the reaction L-proline + NAD(+) = (S)-1-pyrroline-5-carboxylate + NADH + 2 H(+). It functions in the pathway amino-acid biosynthesis; L-proline biosynthesis; L-proline from L-glutamate 5-semialdehyde: step 1/1. Catalyzes the reduction of 1-pyrroline-5-carboxylate (PCA) to L-proline. The sequence is that of Pyrroline-5-carboxylate reductase 1 (proH) from Bacillus spizizenii (strain ATCC 23059 / NRRL B-14472 / W23) (Bacillus subtilis subsp. spizizenii).